Here is a 299-residue protein sequence, read N- to C-terminus: Probable lipid kinase YegS (299 aa).

The DAGKc domain maps to 2-133 (ANFPASLLIL…IDMARVNDKT (132 aa)). ATP-binding positions include Thr-40, 66–72 (GDGTINE), and Thr-95. Positions 215, 218, and 220 each coordinate Mg(2+). The active-site Proton acceptor is Glu-271.

It belongs to the diacylglycerol/lipid kinase family. YegS lipid kinase subfamily. Requires Mg(2+) as cofactor. The cofactor is Ca(2+).

The protein resides in the cytoplasm. Probably phosphorylates lipids; the in vivo substrate is unknown. The chain is Probable lipid kinase YegS from Salmonella paratyphi A (strain ATCC 9150 / SARB42).